Reading from the N-terminus, the 135-residue chain is Peptide methionine sulfoxide reductase MsrB (135 aa).

The region spanning Asp-13–Val-135 is the MsrB domain. Positions 52, 55, 101, and 104 each coordinate Zn(2+). Cys-124 serves as the catalytic Nucleophile.

It belongs to the MsrB Met sulfoxide reductase family. Zn(2+) is required as a cofactor.

The catalysed reaction is L-methionyl-[protein] + [thioredoxin]-disulfide + H2O = L-methionyl-(R)-S-oxide-[protein] + [thioredoxin]-dithiol. The chain is Peptide methionine sulfoxide reductase MsrB from Agrobacterium fabrum (strain C58 / ATCC 33970) (Agrobacterium tumefaciens (strain C58)).